The sequence spans 110 residues: UPF0339 protein YegP (110 aa).

Repeat copies occupy residues 10-58 and 61-109.

It belongs to the UPF0339 family. Duplicated subfamily.

This is UPF0339 protein YegP (yegP) from Escherichia coli O6:H1 (strain CFT073 / ATCC 700928 / UPEC).